We begin with the raw amino-acid sequence, 324 residues long: Tumor necrosis factor receptor superfamily member 6 (324 aa).

Residues 1 to 21 (MLWIMAVLPLVLAGPELNVRM) form the signal peptide. At 22 to 171 (QGTDSIFEGL…CKKQSSNYKL (150 aa)) the chain is on the extracellular side. An N-linked (GlcNAc...) asparagine glycan is attached at N43. 3 TNFR-Cys repeats span residues 43–79 (NCSE…PTCH), 80–123 (PCTE…NTKC), and 124–163 (RCKE…TKCK). Disulfide bonds link C44/C55, C56/C69, C59/C78, C81/C97, C100/C115, C103/C123, C125/C139, C142/C154, and C145/C162. N-linked (GlcNAc...) asparagine glycans are attached at residues N114 and N132. The chain crosses the membrane as a helical span at residues 172–188 (LWLLILPGLAILFVFIY). Over 189 to 324 (KRYRKRQPGD…RNENEGQSLE (136 aa)) the chain is Cytoplasmic. An interaction with HIPK3 region spans residues 201–306 (SGIPSPESVP…EEIQAMVWED (106 aa)). The residue at position 214 (S214) is a Phosphoserine. The interval 219-243 (NKYIWRTAEKMKICDAKKFARQHKI) is interaction with CALM. The Death domain occupies 219-303 (NKYIWRTAEK…DIAEEIQAMV (85 aa)).

In terms of assembly, component of the death-induced signaling complex (DISC) composed of cell surface receptor FAS/CD95, adapter protein FADD and the CASP8 protease; recruitment of CASP8 to the complex is required for processing of CASP8 into the p18 and p10 subunits. Interacts directly (via DED domain) with NOL3 (via CARD domain); inhibits death-inducing signaling complex (DISC) assembly by inhibiting the increase in FAS-FADD binding induced by FAS activation. Binds DAXX. Interacts with HIPK3. Part of a complex containing HIPK3 and FADD. Binds RIPK1 and FAIM2. Interacts with BABAM2 and FEM1B. Interacts with CALM. In the absence of stimulation, interacts with BIRC2, DDX3X and GSK3B. The interaction with BIRC2 and DDX3X is further enhanced upon receptor stimulation and accompanied by DDX3X and BIRC2 cleavage. Post-translationally, palmitoylated. Palmitoylation by ZDHHC7 prevents the lysosomal degradation of FAS regulating its expression at the plasma membrane.

The protein resides in the cell membrane. The protein localises to the membrane raft. Receptor for TNFSF6/FASLG. The adapter molecule FADD recruits caspase CASP8 to the activated receptor. The resulting death-inducing signaling complex (DISC) performs CASP8 proteolytic activation which initiates the subsequent cascade of caspases (aspartate-specific cysteine proteases) mediating apoptosis. FAS-mediated apoptosis may have a role in the induction of peripheral tolerance, in the antigen-stimulated suicide of mature T-cells, or both. This chain is Tumor necrosis factor receptor superfamily member 6 (Fas), found in Rattus norvegicus (Rat).